The sequence spans 1192 residues: Outer capsid protein VP2 (1192 aa).

Positions 1112-1192 are disordered; sequence IDQFMLDDMP…QSVAKPGIVR (81 aa). Residues 1140 to 1150 show a composition bias toward low complexity; that stretch reads PSAAANTEAST. Residues 1159–1183 are compositionally biased toward polar residues; that stretch reads NVVSPTVPGQPSQTPVNPNQSTELQ.

It is found in the virion. The catalysed reaction is a 5'-end diphospho-ribonucleoside in mRNA + GTP + H(+) = a 5'-end (5'-triphosphoguanosine)-ribonucleoside in mRNA + diphosphate. It catalyses the reaction a 5'-end (5'-triphosphoguanosine)-ribonucleoside in mRNA + S-adenosyl-L-methionine = a 5'-end (N(7)-methyl 5'-triphosphoguanosine)-ribonucleoside in mRNA + S-adenosyl-L-homocysteine. Functionally, outer capsid protein involved in mRNA capping. Catalyzes the last 3 enzymatic activities for formation of the 5' cap structure on the viral plus-strand transcripts, namely the RNA guanylyltransferase, RNA-7N- and RNA-2'O-methyltransferase activities. The chain is Outer capsid protein VP2 (S2) from Rice ragged stunt virus (isolate Thailand) (RRSV).